Here is a 151-residue protein sequence, read N- to C-terminus: HTH-type transcriptional regulator FL11 (151 aa).

The HTH asnC-type domain occupies L5–N66. Positions L24–K43 form a DNA-binding region, H-T-H motif. Residue E98–D104 coordinates L-arginine. L-lysine is bound by residues N118, D122, and T133–T135. L-arginine contacts are provided by residues D122 and T133 to T135.

Homodimer. Binds DNA as a dimer and an octamer.

In the famine mode, FL11 forms dimers and acts as a repressor, leading to growth arrest. In the feast mode, in the presence of high concentrations of lysine or arginine, four dimers assemble into an octamer and cover the fl11 and lysine biosynthesis promoters. This leads to the inhibition of fl11 expression and lysine biosynthesis, decrease of the FL11 concentration in the cell, derepression of the target genes and activation of the metabolism. DNA-binding protein involved in the repression of transcription of a large number of genes, thereby arresting growth, in response to environmental changes. The chain is HTH-type transcriptional regulator FL11 from Pyrococcus furiosus (strain ATCC 43587 / DSM 3638 / JCM 8422 / Vc1).